Reading from the N-terminus, the 144-residue chain is Deoxyuridine 5'-triphosphate nucleotidohydrolase (144 aa).

Residues 63-65, asparagine 76, 80-82, and lysine 90 each bind substrate; these read RSG and TID.

This sequence belongs to the dUTPase family. Mg(2+) serves as cofactor.

The enzyme catalyses dUTP + H2O = dUMP + diphosphate + H(+). Its pathway is pyrimidine metabolism; dUMP biosynthesis; dUMP from dCTP (dUTP route): step 2/2. In terms of biological role, this enzyme is involved in nucleotide metabolism: it produces dUMP, the immediate precursor of thymidine nucleotides and it decreases the intracellular concentration of dUTP so that uracil cannot be incorporated into DNA. This Hydrogenobaculum sp. (strain Y04AAS1) protein is Deoxyuridine 5'-triphosphate nucleotidohydrolase.